Reading from the N-terminus, the 264-residue chain is tRNA pseudouridine synthase A (264 aa).

The Nucleophile role is filled by aspartate 51. Tyrosine 109 contributes to the substrate binding site.

It belongs to the tRNA pseudouridine synthase TruA family. In terms of assembly, homodimer.

The catalysed reaction is uridine(38/39/40) in tRNA = pseudouridine(38/39/40) in tRNA. Functionally, formation of pseudouridine at positions 38, 39 and 40 in the anticodon stem and loop of transfer RNAs. The sequence is that of tRNA pseudouridine synthase A from Yersinia pseudotuberculosis serotype O:1b (strain IP 31758).